A 647-amino-acid chain; its full sequence is UvrABC system protein C (647 aa).

The region spanning 16–95 (VEPGVYRFRD…IKEFDPRFNV (80 aa)) is the GIY-YIG domain. Residues 208–243 (DRFARELEQQMNAAAAELDFERAARLRDDLGALKRA) enclose the UVR domain.

This sequence belongs to the UvrC family. In terms of assembly, interacts with UvrB in an incision complex.

The protein localises to the cytoplasm. The UvrABC repair system catalyzes the recognition and processing of DNA lesions. UvrC both incises the 5' and 3' sides of the lesion. The N-terminal half is responsible for the 3' incision and the C-terminal half is responsible for the 5' incision. In Mycolicibacterium paratuberculosis (strain ATCC BAA-968 / K-10) (Mycobacterium paratuberculosis), this protein is UvrABC system protein C.